The following is a 640-amino-acid chain: MPAITLPDGSVRDYPGPVTGTEIAASIGPGLAKAALAMEVDGKMMDLSRTLDADARLRFITRRDADSLELIRHDAAHVMAEAVQALYPGTQVTIGPAIEGGFYYDFFRNEPFTPDDLPAIEAKMREIIAANAPFTREVWDRDEAIRFFEARGERFKAELIRDLPASETITIYRQGDWLDLCRGPHMRGTGDIGGAFKLTKVAGAYWRGDHRNPMLSRIYGTAWRDQKELDAHLKQLEEAERRDHRKIGRQMDLFHMQEEAVGSVFWHEKGWRLYRTVEAYMRRRQEEFGYIEVRTPQLLDRKLWEASGHWDNYRSHMFIAEVEDEDKVLAVKPMNCPCHVQIFNHGLRSYRELPLRMAEFGACHRYEPSGALHGIMRVRAFAQDDAHIFCTEDQIADETVRFVEMLRRVYADFGFPEFAVKFADRPTPRSGSDEVWDKAEAALRSACETAGVEFTVNPGEGAFYGPKLEFVLRDAIGRDWQCGTLQVDFVLPERLDASYVTAESGRARPVMLHRAIVGSFERFIGILIENCAGRFPLWLAPTQAAVASIVTDANDYAETVAARLKEAGLAVATDTRNEKINAKVRDLSLALVPNILVVGRREAEQQTVSIRRLGSDKQDSMTLDEAIATLKAEATPPDLR.

Residues 1 to 61 form the TGS domain; it reads MPAITLPDGS…DADARLRFIT (61 aa). Residues 243–536 form a catalytic region; the sequence is DHRKIGRQMD…LIENCAGRFP (294 aa). Zn(2+)-binding residues include C336, H387, and H513.

Belongs to the class-II aminoacyl-tRNA synthetase family. Homodimer. It depends on Zn(2+) as a cofactor.

The protein localises to the cytoplasm. The catalysed reaction is tRNA(Thr) + L-threonine + ATP = L-threonyl-tRNA(Thr) + AMP + diphosphate + H(+). Functionally, catalyzes the attachment of threonine to tRNA(Thr) in a two-step reaction: L-threonine is first activated by ATP to form Thr-AMP and then transferred to the acceptor end of tRNA(Thr). Also edits incorrectly charged L-seryl-tRNA(Thr). In Acidiphilium cryptum (strain JF-5), this protein is Threonine--tRNA ligase.